Consider the following 362-residue polypeptide: Microfibril-associated glycoprotein 3 (362 aa).

Residues 1–18 (MKLHCCLFTLVASIIVPA) form the signal peptide. At 19 to 147 (AFVLEDVDFD…LRVIFTSGDM (129 aa)) the chain is on the extracellular side. N-linked (GlcNAc...) asparagine glycosylation is found at asparagine 36, asparagine 41, and asparagine 110. Residues 45–137 (PSSFELSASS…SPIRASYSVT (93 aa)) enclose the Ig-like C2-type domain. A disulfide bridge connects residues cysteine 73 and cysteine 124. The chain crosses the membrane as a helical span at residues 148-170 (SVYYMIVCLIAFTITLILNVTRL). Over 171 to 362 (CMMSSHLRKT…KDGAYENCQL (192 aa)) the chain is Cytoplasmic. 2 disordered regions span residues 285–306 (VINP…GSLN) and 323–350 (ETKS…ESNC). Residues 323 to 337 (ETKSIDTESQGSSHF) show a composition bias toward polar residues.

In terms of processing, glycosylated.

The protein resides in the cell membrane. Its function is as follows. Component of the elastin-associated microfibrils. The polypeptide is Microfibril-associated glycoprotein 3 (MFAP3) (Homo sapiens (Human)).